Here is a 446-residue protein sequence, read N- to C-terminus: Xanthone prenyltransferase A (446 aa).

Dimethylallyl diphosphate-binding residues include Arg-113, Lys-199, Tyr-201, Arg-263, Lys-265, Tyr-267, Tyr-369, and Tyr-440.

It belongs to the tryptophan dimethylallyltransferase family.

Its pathway is secondary metabolite biosynthesis. In terms of biological role, xanthone prenyltransferase involved in the conversion of monodictyphenone to the prenyl xanthones such as emericellin, shamixanthone and epishamixanthone. Monodictyphenone is first converted to variecoxanthone A via a paeciloxanthone intermediate by the consecutive actions of the FAD-dependent monooxygenase mdpD and the xanthone prenyltransferase xptB. XptB catalyzes regular O-prenylation at the hydroxy group of C-7 of the xanthone ring. Variecoxanthone A is further prenylated to emericellin by xptA before being reduced to shamixanthone and epishamixanthone by the dehydrogenase xptC. The sequence is that of Xanthone prenyltransferase A from Emericella nidulans (strain FGSC A4 / ATCC 38163 / CBS 112.46 / NRRL 194 / M139) (Aspergillus nidulans).